Here is a 405-residue protein sequence, read N- to C-terminus: Dematin (405 aa).

3 disordered regions span residues 1 to 29 (MERL…SPSS), 81 to 100 (SREC…PEVW), and 108 to 332 (IISQ…DRGN). Positions 11–29 (SPGSVSSSRDSSVPGSPSS) are enriched in low complexity. A phosphoserine mark is found at serine 16, serine 18, serine 26, serine 92, serine 96, serine 110, and serine 113. The span at 113–124 (STPRTTGTPRTS) shows a compositional bias: low complexity. Threonine 114 is modified (phosphothreonine). Residues serine 156 and serine 226 each carry the phosphoserine modification. Over residues 216–228 (EEEEEEEDDDSEE) the composition is skewed to acidic residues. The interval 224–308 (DDSEEEIKAI…SRLQSTEFSP (85 aa)) is interaction with RASGRF2. Composition is skewed to basic and acidic residues over residues 229-242 (EIKA…EELS) and 252-261 (ILKEEMEKSL). 8 positions are modified to phosphoserine: serine 269, serine 279, serine 289, serine 303, serine 315, serine 333, serine 372, and serine 383. Over residues 277 to 292 (HTSLHSGTSKSSSLPS) the composition is skewed to low complexity. The span at 294-322 (GRTTLSRLQSTEFSPSGSEAGSPGLQNGE) shows a compositional bias: polar residues. Residues 337–405 (VLEQKIYPYE…NELKKKASLF (69 aa)) enclose the HP domain. Serine 403 carries the phosphoserine; by PKA modification.

The protein belongs to the villin/gelsolin family. In terms of assembly, monomeric (isoform 2); under reducing conditions. Self-associates. Exists under oxidizing condition as a trimer of two isoforms 2 and isoform 1 linked by disulfide bonds. Found in a complex with DMTN, F-actin and spectrin. Found in a complex with ADD2, DMTN and SLC2A1. Interacts with F-actin, ITPKB and spectrin. Isoform 2 interacts with SLC2A1 (via C-terminus cytoplasmic region). Interacts with RASGRF2. Post-translationally, phosphorylated. Phosphorylation at Ser-403 by PKA causes the C-terminal headpiece domain to associate with the N-terminal core domain, and leads to the inhibition of its actin bundling activity. Expressed in platelets. Isoform 1 and isoform 2 are expressed in mature erythrocytes (at protein level).

It localises to the cytoplasm. The protein localises to the cytosol. Its subcellular location is the perinuclear region. The protein resides in the cytoskeleton. It is found in the cell membrane. It localises to the membrane. The protein localises to the endomembrane system. Its subcellular location is the cell projection. Functionally, membrane-cytoskeleton-associated protein with F-actin-binding activity that induces F-actin bundles formation and stabilization. Its F-actin-bundling activity is reversibly regulated upon its phosphorylation by the cAMP-dependent protein kinase A (PKA). Binds to the erythrocyte membrane glucose transporter-1 SLC2A1/GLUT1, and hence stabilizes and attaches the spectrin-actin network to the erythrocytic plasma membrane. Plays a role in maintaining the functional integrity of PKA-activated erythrocyte shape and the membrane mechanical properties. Also plays a role as a modulator of actin dynamics in fibroblasts; acts as a negative regulator of the RhoA activation pathway. In platelets, functions as a regulator of internal calcium mobilization across the dense tubular system that affects platelet granule secretion pathways and aggregation. Also required for the formation of a diverse set of cell protrusions, such as filopodia and lamellipodia, necessary for platelet cell spreading, motility and migration. Acts as a tumor suppressor and inhibits malignant cell transformation. This Mus musculus (Mouse) protein is Dematin (Dmtn).